A 182-amino-acid polypeptide reads, in one-letter code: Crossover junction endodeoxyribonuclease RuvC (182 aa).

Catalysis depends on residues Asp7, Glu69, and Asp141. Residues Asp7, Glu69, and Asp141 each coordinate Mg(2+).

It belongs to the RuvC family. In terms of assembly, homodimer which binds Holliday junction (HJ) DNA. The HJ becomes 2-fold symmetrical on binding to RuvC with unstacked arms; it has a different conformation from HJ DNA in complex with RuvA. In the full resolvosome a probable DNA-RuvA(4)-RuvB(12)-RuvC(2) complex forms which resolves the HJ. Mg(2+) serves as cofactor.

Its subcellular location is the cytoplasm. It catalyses the reaction Endonucleolytic cleavage at a junction such as a reciprocal single-stranded crossover between two homologous DNA duplexes (Holliday junction).. The RuvA-RuvB-RuvC complex processes Holliday junction (HJ) DNA during genetic recombination and DNA repair. Endonuclease that resolves HJ intermediates. Cleaves cruciform DNA by making single-stranded nicks across the HJ at symmetrical positions within the homologous arms, yielding a 5'-phosphate and a 3'-hydroxyl group; requires a central core of homology in the junction. The consensus cleavage sequence is 5'-(A/T)TT(C/G)-3'. Cleavage occurs on the 3'-side of the TT dinucleotide at the point of strand exchange. HJ branch migration catalyzed by RuvA-RuvB allows RuvC to scan DNA until it finds its consensus sequence, where it cleaves and resolves the cruciform DNA. In Paracidovorax citrulli (strain AAC00-1) (Acidovorax citrulli), this protein is Crossover junction endodeoxyribonuclease RuvC.